The chain runs to 610 residues: MAHENYLYQMRDIKFAVKEWLDMNKLLSCDAYKDYYGIDDIDAFLDVNFKVCRDVLCPANKEADDPGCKFVGGDTQAVITPEVFKNAYNTVCEAGLGPQFSDRSAEGRMPLVWEAPILEMQSGASPSIVMFWCLTAGACTVIQHNASEELKERFLPKMYSGEWGGTMGLTEPGAGSEVGAVATKCFPTDTPGLYKIKGQKCFITSGDHDLASNIIHLVLAKTPDAKPGTSGINCLIVPKFWVNEDGTQGAWNDVTSTGIEHKMGIHGSSTLSLSFGENDNCYGWMIGDGPVDGRGKGMAQMFQMMNEERLNTGTFAQGCIGSAYYAALDYCKMRVQSPKFTDPKGPSVRIIEHEDVRRMLLFQKSIMEACRALLYTTYFYQDLSHDAADPAEREYYDDMTMIQIPLCKAYVSDMAWISTEQAIQCLGGYGFIEEYAPAELARDCKIYSLWEGTNFIQAQDFNNRKTTMKKGEPMKKWVAQIADFLATKKDPAFADEFAMMDDAFSAYNEILSTKEAWRASNPQLVQLFATRMLHAASMMICGKLMLDQALLAAKKLAELGEDHFDAMFYKGKIATARFYVMNVVPGVFGTLKAMKVADTSAIDMPEEAFM.

E451 (proton acceptor) is an active-site residue.

The protein belongs to the acyl-CoA dehydrogenase family. It depends on FAD as a cofactor.

The protein localises to the cytoplasm. The catalysed reaction is butanoyl-CoA + oxidized [electron-transfer flavoprotein] + H(+) = (2E)-butenoyl-CoA + reduced [electron-transfer flavoprotein]. It catalyses the reaction a short-chain 2,3-saturated fatty acyl-CoA + oxidized [electron-transfer flavoprotein] + H(+) = a short-chain (2E)-enoyl-CoA + reduced [electron-transfer flavoprotein]. It functions in the pathway lipid metabolism; butanoate metabolism. Functionally, involved in syntrophic growth of S.wolfei with butyrate, as part of the butyrate oxidation pathway. Catalyzes the oxidation of butanoyl-CoA to crotonyl-CoA. Probably passes the electrons released by this reaction on to electron-transfer flavoproteins (EtfAB) to finally generate hydrogen and/or formate. The chain is Butyryl-CoA dehydrogenase Swol_1933 from Syntrophomonas wolfei subsp. wolfei (strain DSM 2245B / Goettingen).